A 557-amino-acid chain; its full sequence is 2-succinyl-5-enolpyruvyl-6-hydroxy-3-cyclohexene-1-carboxylate synthase (557 aa).

The protein belongs to the TPP enzyme family. MenD subfamily. In terms of assembly, homodimer. It depends on Mg(2+) as a cofactor. Mn(2+) serves as cofactor. The cofactor is thiamine diphosphate.

The enzyme catalyses isochorismate + 2-oxoglutarate + H(+) = 5-enolpyruvoyl-6-hydroxy-2-succinyl-cyclohex-3-ene-1-carboxylate + CO2. It functions in the pathway quinol/quinone metabolism; 1,4-dihydroxy-2-naphthoate biosynthesis; 1,4-dihydroxy-2-naphthoate from chorismate: step 2/7. Its pathway is quinol/quinone metabolism; menaquinone biosynthesis. Catalyzes the thiamine diphosphate-dependent decarboxylation of 2-oxoglutarate and the subsequent addition of the resulting succinic semialdehyde-thiamine pyrophosphate anion to isochorismate to yield 2-succinyl-5-enolpyruvyl-6-hydroxy-3-cyclohexene-1-carboxylate (SEPHCHC). The polypeptide is 2-succinyl-5-enolpyruvyl-6-hydroxy-3-cyclohexene-1-carboxylate synthase (Staphylococcus aureus (strain MSSA476)).